A 2058-amino-acid chain; its full sequence is Protein Daple (2058 aa).

A Calponin-homology (CH) domain is found at 11–131 (HFLESPLVTW…KILLLMLGCA (121 aa)). Coiled coils occupy residues 195–221 (HLKR…DYLQ), 247–428 (EDKK…SMNE), 455–1016 (ELNE…LRGA), 1043–1082 (ELLK…NLNL), and 1108–1388 (ANLQ…KFYD). 7 disordered regions span residues 1406–1444 (LIKP…MRPL), 1480–1592 (HRMS…EDMI), 1617–1655 (TKNR…PGSE), 1696–1724 (LHPS…LPSA), 1831–1857 (YSAT…RGNS), 1940–1959 (LALP…ASSL), and 1988–2051 (PVRP…PQTV). Over residues 1409-1418 (PKKEPSRESV) the composition is skewed to basic and acidic residues. Residues 1419–1429 (KSPTDVQSKTM) are compositionally biased toward polar residues. Positions 1494-1506 (GPEHLSRSRRMES) are enriched in basic and acidic residues. Positions 1552 to 1577 (NAGSSRVPWTSSLEVSRSASNSSSPL) are enriched in polar residues. 2 short sequence motifs (GBA) span residues 1653–1675 (GSEM…PSRR) and 1676–1697 (HSLN…ETLH). The segment covering 1831–1841 (YSATSSSQSPE) has biased composition (polar residues). The span at 2039–2048 (PASPDPSADP) shows a compositional bias: low complexity. The short motif at 2055 to 2058 (YGCV) is the PDZ-binding element.

Belongs to the CCDC88 family. In terms of assembly, interacts with dvl2/dsh via the PDZ-binding motif. As to expression, expressed weakly in gastrulae, with slightly stronger expression in the dorsal region. In neurulae, expressed in the neural plate with strong expression in the presumptive mesencephalic region. At the tailbud stage, expressed in somatic cells and in part of the tail. Also strongly expressed in regions of the head including eye vesicles, otic vesicles, olfactory placode and the pharyngeal cavity.

It is found in the cytoplasm. It localises to the cell junction. Positive regulator of Wnt signaling, acting synergistically with dvl2/dsh. Functions upstream of ctnnb1/beta-catenin in the canonical Wnt pathway, and also activates jnk in the Wnt/planar cell polarity (PCP) pathway. Acts as a non-receptor guanine nucleotide exchange factor which binds to and activates guanine nucleotide-binding protein G(i) alpha subunits. This promotes apical cell constriction and subsequent bending of the neural plate during neurulation via arhgef18. This chain is Protein Daple (ccdc88c), found in Xenopus laevis (African clawed frog).